Here is a 256-residue protein sequence, read N- to C-terminus: Small ribosomal subunit protein uS2 (256 aa).

Belongs to the universal ribosomal protein uS2 family.

The polypeptide is Small ribosomal subunit protein uS2 (Rhizobium rhizogenes (strain K84 / ATCC BAA-868) (Agrobacterium radiobacter)).